Reading from the N-terminus, the 513-residue chain is ATP synthase subunit alpha 2 (513 aa).

169 to 176 serves as a coordination point for ATP; it reads GDRQCGKT.

This sequence belongs to the ATPase alpha/beta chains family. As to quaternary structure, F-type ATPases have 2 components, CF(1) - the catalytic core - and CF(0) - the membrane proton channel. CF(1) has five subunits: alpha(3), beta(3), gamma(1), delta(1), epsilon(1). CF(0) has three main subunits: a(1), b(2) and c(9-12). The alpha and beta chains form an alternating ring which encloses part of the gamma chain. CF(1) is attached to CF(0) by a central stalk formed by the gamma and epsilon chains, while a peripheral stalk is formed by the delta and b chains.

Its subcellular location is the cell inner membrane. It catalyses the reaction ATP + H2O + 4 H(+)(in) = ADP + phosphate + 5 H(+)(out). In terms of biological role, produces ATP from ADP in the presence of a proton gradient across the membrane. The alpha chain is a regulatory subunit. This chain is ATP synthase subunit alpha 2, found in Paraburkholderia xenovorans (strain LB400).